Consider the following 97-residue polypeptide: Early nodulin-75 (97 aa).

The segment at 1–97 (RPHVHPPPEH…PEYQPPHEKP (97 aa)) is disordered. Pro residues-rich tracts occupy residues 9–22 (EHQP…PEYQ) and 31–43 (VHPP…PYQK). A compositionally biased stretch (basic and acidic residues) spans 76–97 (PPHEKPPHEHPPPEYQPPHEKP).

Belongs to the nodulin 75 family.

Functionally, involved in early stages of root nodule development. The polypeptide is Early nodulin-75 (ENOD2) (Medicago sativa (Alfalfa)).